Reading from the N-terminus, the 369-residue chain is tRNA-specific 2-thiouridylase MnmA (369 aa).

Residues 16-23 and methionine 42 contribute to the ATP site; that span reads AMSGGVDS. The active-site Nucleophile is cysteine 110. Cysteine 110 and cysteine 206 are oxidised to a cystine. An ATP-binding site is contributed by glycine 134. Positions 156–158 are interaction with tRNA; sequence KDQ. Residue cysteine 206 is the Cysteine persulfide intermediate of the active site.

Belongs to the MnmA/TRMU family.

Its subcellular location is the cytoplasm. The enzyme catalyses S-sulfanyl-L-cysteinyl-[protein] + uridine(34) in tRNA + AH2 + ATP = 2-thiouridine(34) in tRNA + L-cysteinyl-[protein] + A + AMP + diphosphate + H(+). Its function is as follows. Catalyzes the 2-thiolation of uridine at the wobble position (U34) of tRNA, leading to the formation of s(2)U34. The chain is tRNA-specific 2-thiouridylase MnmA from Orientia tsutsugamushi (strain Boryong) (Rickettsia tsutsugamushi).